The primary structure comprises 56 residues: MAKKGVREKIRLVSSAGTGHFYTTDKNKRNMPGKFEIKKFDPVVRQHVMYKEAKIK.

Belongs to the bacterial ribosomal protein bL33 family.

The sequence is that of Large ribosomal subunit protein bL33 from Vibrio campbellii (strain ATCC BAA-1116).